The sequence spans 79 residues: uncharacterized protein (79 aa).

This is an uncharacterized protein from Haemophilus influenzae (strain ATCC 51907 / DSM 11121 / KW20 / Rd).